We begin with the raw amino-acid sequence, 695 residues long: GATA zinc finger domain-containing protein 16 (695 aa).

Disordered stretches follow at residues 82 to 111, 134 to 304, and 422 to 472; these read SPILASQQQQQHMQSSPILASSNLTNSNNA, VVNS…QQDK, and NNQF…KMRY. Low complexity-rich tracts occupy residues 87–111 and 140–149; these read SQQQQQHMQSSPILASSNLTNSNNA and KTTTTNNKPP. Residues 150–174 are a coiled coil; the sequence is KQSKRKEKERLEEEKQTVAQQQQYQ. The segment covering 155 to 165 has biased composition (basic and acidic residues); the sequence is KEKERLEEEKQ. The span at 199–209 shows a compositional bias: polar residues; sequence VSTTPYGNSQF. Positions 210–298 are enriched in low complexity; that stretch reads NNNNNNNNNN…NSNSNNNNNN (89 aa). Polar residues predominate over residues 422–433; the sequence is NNQFSGDKQSAL. Low complexity predominate over residues 434 to 446; the sequence is NNVKNSKGGNTNN. A GATA-type zinc finger spans residues 479 to 504; the sequence is CHTCGVTNTPEWRRGPNGAKTLCNAC. Residues 523–646 are disordered; the sequence is NSTGVNITEP…TTNSITTPTT (124 aa). 2 stretches are compositionally biased toward low complexity: residues 544-556 and 564-646; these read DNNNNNNNSSDSN and GSNN…TPTT.

This is GATA zinc finger domain-containing protein 16 (gtaP) from Dictyostelium discoideum (Social amoeba).